A 521-amino-acid polypeptide reads, in one-letter code: Type-1 glutamine synthetase 2 (521 aa).

One can recognise a GS beta-grasp domain in the interval 76–176 (NQIKISKSPF…FLMDFIGTNG (101 aa)). The GS catalytic domain occupies 183–521 (PRSTLKKVIK…WELERYLEII (339 aa)).

It belongs to the glutamine synthetase family.

It carries out the reaction L-glutamate + NH4(+) + ATP = L-glutamine + ADP + phosphate + H(+). The protein is Type-1 glutamine synthetase 2 (glnA2) of Dictyostelium discoideum (Social amoeba).